The primary structure comprises 340 residues: Glycerol-3-phosphate dehydrogenase [NAD(P)+] (340 aa).

Ser11, Trp12, Arg33, and Lys106 together coordinate NADPH. Sn-glycerol 3-phosphate contacts are provided by Lys106, Gly137, and Ser139. Ala141 serves as a coordination point for NADPH. Residues Lys192, Asp245, Ser255, Arg256, and Asn257 each coordinate sn-glycerol 3-phosphate. Residue Lys192 is the Proton acceptor of the active site. Arg256 contacts NADPH. Val280 and Glu282 together coordinate NADPH.

The protein belongs to the NAD-dependent glycerol-3-phosphate dehydrogenase family.

Its subcellular location is the cytoplasm. The catalysed reaction is sn-glycerol 3-phosphate + NAD(+) = dihydroxyacetone phosphate + NADH + H(+). The enzyme catalyses sn-glycerol 3-phosphate + NADP(+) = dihydroxyacetone phosphate + NADPH + H(+). Its pathway is membrane lipid metabolism; glycerophospholipid metabolism. In terms of biological role, catalyzes the reduction of the glycolytic intermediate dihydroxyacetone phosphate (DHAP) to sn-glycerol 3-phosphate (G3P), the key precursor for phospholipid synthesis. In Bacillus cereus (strain B4264), this protein is Glycerol-3-phosphate dehydrogenase [NAD(P)+].